Reading from the N-terminus, the 1724-residue chain is Protein scribble homolog (1724 aa).

The segment at 1–821 (MLKCIPLWRC…MTVLRERMVE (821 aa)) is sufficient for targeting to adherens junction. LRR repeat units lie at residues 11 to 34 (NRHV…IYRY), 35 to 58 (NRSL…FFRL), 59 to 81 (HNLR…VANF), 83 to 105 (QLVE…KFCQ), 107 to 127 (LEIA…FTQL), 128 to 150 (RGLA…IGNL), 151 to 174 (SNLV…SFLV), 176 to 196 (LEQL…LGAL), 197 to 219 (PNLR…LGNL), 221 to 242 (QLVC…ISGL), 244 to 265 (ALTD…IGSL), 266 to 288 (KKLS…IGEC), 289 to 311 (ENLT…LGKL), 312 to 334 (KKLT…LGGC), 336 to 357 (SLNV…LANA), 359 to 380 (ELHV…LANL), and 382 to 405 (LKAM…DDEQ). Disordered regions lie at residues 451–484 (RDDS…LKVM), 496–620 (YTAR…RKDT), and 646–683 (SHDG…HTPF). A compositionally biased stretch (low complexity) spans 518-534 (SNQSHDSQASSSTTSAT). Acidic residues predominate over residues 554–567 (VQEEEDLDEMEVEY). The segment covering 574-583 (FAEEPIIRGG) has biased composition (basic and acidic residues). Positions 584-598 (DEDDDYDNDDDDAER) are enriched in acidic residues. Over residues 611–620 (EKQRLIRKDT) the composition is skewed to basic and acidic residues. Residues 661–678 (RDGEDDEEEEEDEDEEDD) are compositionally biased toward acidic residues. 4 consecutive PDZ domains span residues 731 to 818 (TLSI…LRER), 867 to 955 (ATCL…DREQ), 1005 to 1094 (EVTL…RRDP), and 1101 to 1193 (EIVI…CDGF). Residues 955-995 (QSSVGGASPRTRPHSPPPPEPSDSPEQEDGGDEHLGNHLNC) form a disordered region. 4 disordered regions span residues 1283 to 1407 (LQKV…DRQK), 1414 to 1433 (KQQT…EDDL), 1449 to 1468 (REFM…AKQV), and 1488 to 1555 (SLGS…GESA). Over residues 1295-1306 (FRIDSPVRDAAH) the composition is skewed to basic and acidic residues. Composition is skewed to polar residues over residues 1308–1329 (PHNS…NAST), 1346–1357 (PASQDGHSSPNP), and 1364–1385 (PINS…KQPS). Residues 1395–1407 (HSPEQRSFKDRQK) are compositionally biased toward basic and acidic residues. Residues 1430-1461 (EDDLKKMKEEEAKRIEQRAREFMLDEDEEEEE) adopt a coiled-coil conformation. Residues 1453 to 1463 (LDEDEEEEEED) are compositionally biased toward acidic residues. Positions 1490-1506 (GSPTSRQCATPPNYSAT) are enriched in polar residues. Low complexity predominate over residues 1507–1518 (PPSHCGSSGPSS). The span at 1521 to 1538 (GKGDSQRNSVEDSFRLEQ) shows a compositional bias: basic and acidic residues. S1609 is modified (phosphoserine). The tract at residues 1621 to 1684 (IAKSKEGKKR…FMDESSSNAV (64 aa)) is disordered. Positions 1623 to 1632 (KSKEGKKRGT) are enriched in basic and acidic residues.

In terms of processing, palmitoylated.

The protein resides in the cell membrane. It is found in the cell junction. Its subcellular location is the adherens junction. The protein localises to the cell projection. It localises to the lamellipodium. The protein resides in the cytoplasm. It is found in the postsynapse. Its subcellular location is the presynapse. Its function is as follows. Scaffold protein involved in different aspects of polarized cells differentiation regulating epithelial and neuronal morphogenesis. Regulates the caudal migration of the nVII motor neurons. Required for convergent extension movements during gastrulation. The sequence is that of Protein scribble homolog (scrib) from Danio rerio (Zebrafish).